The primary structure comprises 1946 residues: Chromodomain-helicase-DNA-binding protein 5 (1946 aa).

3 disordered regions span residues 1–140 (MRGP…SGQL), 236–272 (VPQT…GRGK), and 285–340 (SKRK…GDGY). 2 stretches are compositionally biased toward acidic residues: residues 17 to 37 (EEME…EGFE) and 72 to 90 (NDEM…ESEG). Basic residues-rich tracts occupy residues 96–118 (TKKK…KRKK) and 254–272 (GVRK…GRGK). Over residues 293–303 (SEEDEREDSDL) the composition is skewed to acidic residues. The segment covering 323–332 (KKNKRRRKKK) has biased composition (basic residues). 2 consecutive PHD-type zinc fingers follow at residues 345-392 (QDYC…CEKE) and 418-465 (MEFC…CTCP). Residues 345 to 655 (QDYCEVCQQG…HRELMLGEDA (311 aa)) form a histone-binding region. In terms of domain architecture, Chromo 1 spans 499–556 (MPPPRPLEGIPEREFFVKWAGLSYWHCSWVKELQLELYHTVMYRNYQRKNDMDEPPPF). Residues 551 to 573 (DEPPPFDYGSGDEDGKSEKRKNK) form a disordered region. Residues 563 to 573 (EDGKSEKRKNK) are compositionally biased toward basic and acidic residues. One can recognise a Chromo 2 domain in the interval 594-655 (MMVHRILNHS…HRELMLGEDA (62 aa)). The Helicase ATP-binding domain maps to 714–898 (RFSWAQGTDT…FHLLNFLTPE (185 aa)). 727-734 (DEMGLGKT) contacts ATP. Residues 849 to 852 (DEAH) carry the DEAH box motif. In terms of domain architecture, Helicase C-terminal spans 1030–1195 (LLQKMLKKLR…MTKQELDDIL (166 aa)). Disordered stretches follow at residues 1210–1254 (MMSQ…VEDS), 1353–1413 (YNDA…LPPL), 1525–1566 (KYST…APLG), 1579–1696 (DEKE…EDKN), and 1926–1946 (SFPA…LQPF). Residues 1212–1230 (SQGQRPTTPIPDIQSTKGG) show a composition bias toward polar residues. 2 stretches are compositionally biased toward acidic residues: residues 1357–1368 (SQEDQEWQDELS) and 1378–1387 (SEDEDEDFEE). The residue at position 1392 (Q1392) is an N5-methylglutamine. Residues 1551–1564 (TPVPASPAQLPPAP) are compositionally biased toward pro residues. At S1556 the chain carries Phosphoserine. Composition is skewed to basic and acidic residues over residues 1602–1629 (DRVE…EVEK), 1637–1654 (PLKE…DKPE), and 1661–1676 (GDFR…KEPG).

The protein belongs to the SNF2/RAD54 helicase family. In terms of assembly, component of the nucleosome remodeling and deacetylase (NuRD) repressor complex, composed of core proteins MTA1, MTA2, MTA3, RBBP4, RBBP7, HDAC1, HDAC2, MBD2, MBD3, and peripherally associated proteins CDK2AP1, CDK2AP2, GATAD2A, GATAD2B, CHD3, CHD4 and CHD5. The exact stoichiometry of the NuRD complex is unknown, and some subunits such as MBD2 and MBD3, GATAD2A and GATAD2B, and CHD3, CHD4 and CHD5 define mutually exclusive NuRD complexes. Interacts with HDAC2. Post-translationally, methylated at Gln-1392 by N6AMT1. Specifically expressed by neurons in brain, retina and adrenal gland (at protein level). Also detected in testis.

Its subcellular location is the nucleus. The protein resides in the chromosome. The enzyme catalyses ATP + H2O = ADP + phosphate + H(+). Its function is as follows. ATP-dependent chromatin-remodeling factor that binds DNA through histones and regulates gene transcription. May specifically recognize and bind trimethylated 'Lys-27' (H3K27me3) and non-methylated 'Lys-4' of histone H3. Acts as a component of the histone deacetylase NuRD complex which participates in the remodeling of chromatin. Plays a role in the development of the nervous system by activating the expression of genes promoting neuron terminal differentiation. In parallel, it may also positively regulate the trimethylation of histone H3 at 'Lys-27' thereby specifically repressing genes that promote the differentiation into non-neuronal cell lineages. Regulates the expression of genes involved in cell proliferation and differentiation. Downstream activated genes may include CDKN2A that positively regulates the p53/TP53 pathway, which in turn, prevents cell proliferation. In spermatogenesis, it probably regulates histone hyperacetylation and the replacement of histones by transition proteins in chromatin, a crucial step in the condensation of spermatid chromatin and the production of functional spermatozoa. The sequence is that of Chromodomain-helicase-DNA-binding protein 5 (Chd5) from Mus musculus (Mouse).